The following is a 131-amino-acid chain: Ribosome-binding factor A (131 aa).

Belongs to the RbfA family. Monomer. Binds 30S ribosomal subunits, but not 50S ribosomal subunits or 70S ribosomes.

The protein localises to the cytoplasm. One of several proteins that assist in the late maturation steps of the functional core of the 30S ribosomal subunit. Associates with free 30S ribosomal subunits (but not with 30S subunits that are part of 70S ribosomes or polysomes). Required for efficient processing of 16S rRNA. May interact with the 5'-terminal helix region of 16S rRNA. The protein is Ribosome-binding factor A of Christiangramia forsetii (strain DSM 17595 / CGMCC 1.15422 / KT0803) (Gramella forsetii).